A 124-amino-acid polypeptide reads, in one-letter code: Small ribosomal subunit protein uS12 (124 aa).

The residue at position 89 (Asp89) is a 3-methylthioaspartic acid.

The protein belongs to the universal ribosomal protein uS12 family. In terms of assembly, part of the 30S ribosomal subunit. Contacts proteins S8 and S17. May interact with IF1 in the 30S initiation complex.

With S4 and S5 plays an important role in translational accuracy. Its function is as follows. Interacts with and stabilizes bases of the 16S rRNA that are involved in tRNA selection in the A site and with the mRNA backbone. Located at the interface of the 30S and 50S subunits, it traverses the body of the 30S subunit contacting proteins on the other side and probably holding the rRNA structure together. The combined cluster of proteins S8, S12 and S17 appears to hold together the shoulder and platform of the 30S subunit. The protein is Small ribosomal subunit protein uS12 of Aeromonas hydrophila subsp. hydrophila (strain ATCC 7966 / DSM 30187 / BCRC 13018 / CCUG 14551 / JCM 1027 / KCTC 2358 / NCIMB 9240 / NCTC 8049).